Reading from the N-terminus, the 350-residue chain is Dihydroorotase (350 aa).

Zn(2+) is bound by residues His17 and His19. Residues 19–21 (HFR) and Asn45 each bind substrate. Zn(2+) contacts are provided by Lys103, His140, and His178. Position 103 is an N6-carboxylysine (Lys103). His140 contributes to the substrate binding site. A substrate-binding site is contributed by Leu223. A Zn(2+)-binding site is contributed by Asp251. Residue Asp251 is part of the active site. His255 and Ala267 together coordinate substrate.

It belongs to the metallo-dependent hydrolases superfamily. DHOase family. Class II DHOase subfamily. As to quaternary structure, homodimer. Requires Zn(2+) as cofactor.

It carries out the reaction (S)-dihydroorotate + H2O = N-carbamoyl-L-aspartate + H(+). The protein operates within pyrimidine metabolism; UMP biosynthesis via de novo pathway; (S)-dihydroorotate from bicarbonate: step 3/3. Functionally, catalyzes the reversible cyclization of carbamoyl aspartate to dihydroorotate. This Photorhabdus laumondii subsp. laumondii (strain DSM 15139 / CIP 105565 / TT01) (Photorhabdus luminescens subsp. laumondii) protein is Dihydroorotase.